The sequence spans 295 residues: Manganese transport system membrane protein MntD (295 aa).

Helical transmembrane passes span 7–27 (IIAT…FLVL), 42–62 (LLGI…YMFI), 63–83 (GAAA…SKGV), 87–107 (AAIG…LSVY), 138–158 (IGPK…VLIS), 174–194 (ALAL…MLSL), 203–223 (VGAV…HLLT), 227–247 (LYML…GYFF), and 253–273 (VSIS…AFLF).

Belongs to the ABC-3 integral membrane protein family. The complex is probably composed of two ATP-binding proteins (MntB), two transmembrane proteins (MntC and MntD) and a solute-binding protein (MntA).

It localises to the cell membrane. In terms of biological role, probably part of the ABC transporter complex MntABCD involved in manganese import. Probably responsible for the translocation of the substrate across the membrane. The protein is Manganese transport system membrane protein MntD of Bacillus subtilis (strain 168).